Consider the following 337-residue polypeptide: MPPKSHKCSRKEGEVEEPLLTENPDRYVIFPIKYPDIWQKYKEAESSIWTVEEIDLGNDMTDWEKLDDGERHFIKHVLAFFAASDGIVLENLAERFMCEVQVPEVRCFYGFQIAMENIHSETYSVLIDTYVVDPDEKQRLLHAIRTIPCIEKKAKWAIEWIGSQTSFPTRLVAFAAVEGIFFSGSFCAIFWLKKRGLMPGLTFSNELISRDEGLHTDFACLLYEKYIVNKLPRDRVLEIICNAVSIEREFICDALPVRLIGMNSQLMTQYIEFVADRLLVSLGYDRHYNSKNPFDFMDMISLQGKTNFFEKKVGEYQKAGVMSSERSSKVFSLDADF.

Fe cation-binding residues include aspartate 85, glutamate 116, and histidine 119. Tyrosine 123 is an active-site residue. Residues glutamate 178, glutamate 212, and histidine 215 each coordinate Fe cation.

Belongs to the ribonucleoside diphosphate reductase small chain family. Heterodimer of a large and a small subunit. Requires Fe cation as cofactor.

The catalysed reaction is a 2'-deoxyribonucleoside 5'-diphosphate + [thioredoxin]-disulfide + H2O = a ribonucleoside 5'-diphosphate + [thioredoxin]-dithiol. Functionally, provides the precursors necessary for DNA synthesis. Catalyzes the biosynthesis of deoxyribonucleotides from the corresponding ribonucleotides. This is Ribonucleoside-diphosphate reductase small chain (RNR2) from Trypanosoma brucei brucei.